A 363-amino-acid chain; its full sequence is Outer membrane porin F (363 aa).

The first 22 residues, 1–22 (MMKRKILAAVIPALLAAATANA), serve as a signal peptide directing secretion.

Belongs to the Gram-negative porin family. Homotrimer. Forms mixed heterotrimers with OmpC and with PhoE; other mixed heterotrimers with other porins are also probable.

It is found in the cell outer membrane. Functionally, forms pores that allow passive diffusion of small molecules across the outer membrane. The polypeptide is Outer membrane porin F (Salmonella typhimurium (strain SL1344)).